Consider the following 388-residue polypeptide: uncharacterized protein (388 aa).

Residues Cys18, Cys24, Cys27, and Cys99 each contribute to the [4Fe-4S] cluster site. The S-adenosyl-L-methionine site is built by Gln212, Glu262, and Asn313. The active-site Nucleophile is Cys343.

It belongs to the class I-like SAM-binding methyltransferase superfamily. RNA M5U methyltransferase family.

This is an uncharacterized protein from Bdellovibrio bacteriovorus (strain ATCC 15356 / DSM 50701 / NCIMB 9529 / HD100).